Consider the following 349-residue polypeptide: Crinkler effector protein 5 (349 aa).

Positions 1–17 are cleaved as a signal peptide; that stretch reads MVKLFCSIVGVAGSPFS. Residues 18–57 form an LQLFLAK domain region; that stretch reads VEVNEGKTVDDLKKAIKAENLDDPTLRNVAPKNLQLFLAK. Residues 58 to 108 are DWL domain; it reads KGDAWLRYNEDLDTYLQSEIDTSSYLHMRASWKLSKPTLFGPDVSLGEDVV. An HVLVXXP motif motif is present at residues 109–115; it reads HVLVVVP.

Belongs to the Crinkler effector family.

The protein localises to the secreted. The protein resides in the host nucleus. Secreted effector that elicits necrosis in host plants, a characteristic of plant innate immunity. In Phytophthora infestans (Potato late blight agent), this protein is Crinkler effector protein 5.